Consider the following 705-residue polypeptide: MLRNFLKSRFLAPRGMSCFSQVMNPITGQNSWQERGDDYDYHLEVANAGFGDMLHDWERNQKYFAALRKTIAGMREAGREVHVLDIGTGTGILSMMALAAGADSVTACEAFLPMANCAEKILAANGAGDKVRLIRKRSTEIQVGEDMPRKANLLVAELLDTELIGEGAIGIYNHAHAELLTEDALCIPARARCYAQVAQSPLAAQWNSLKTIANLDGEPLLHPPEQLKSCQGEAALHDVQLSQLPSSAFRPLTDPVEIFQFDFQRKQEREKQRAQLLKLQSKQPGAAELVFYWWDIQLDDGGEILLSCAPYWAHPQLKELAAEKAKDHPLPNVVPWRDHWMQAIYYIPKPLQLLEAGKSFHLSCHHDEYSLWFDAREEAPTKSVRRHTCTCDLHMTYSRSRIGQLNQSPRNKRYLRYLEESIEAEKSNVLVLGNGCLLGLASSALGAASVLLHEPHRFSRRLLESIVKHNQLKNVHFLDKVEELEDSQLAALTHIFAEPYFLNAILPWDNFYFGTLLTKIKDKLPEGVKILPCSARIYALPVEFLDLHKIRAPVGSCEGFDLRLFDEMVERSAEQAVSLVEAQPLWEYPCRALSEPQEVLSVDFSNFGQEHSLKGSIELKHTGICNGVALWVDWKLVEDNSPRSIVSSGPSEPVVPGEFVKWDMFVRQGVHFPRKPKDAVTHLEWSTDFKPLLGELNFSFGQKKL.

SAM-dependent MTase PRMT-type domains are found at residues 29 to 372 (QNSW…YSLW) and 381 to 705 (TKSV…QKKL).

This sequence belongs to the class I-like SAM-binding methyltransferase superfamily. Protein arginine N-methyltransferase family. PRMT7 subfamily.

Functionally, essential arginine methyltransferase that can both catalyze the formation of omega-N monomethylarginine (MMA) and symmetrical dimethylarginine (sDMA). Specifically mediates the symmetrical dimethylation of arginine residues in the small nuclear ribonucleoproteins SmD1 and SmD3. This Drosophila simulans (Fruit fly) protein is Protein arginine N-methyltransferase 7 (Art7).